The following is a 158-amino-acid chain: NAD(P)H-quinone oxidoreductase subunit J, chloroplastic (158 aa).

This sequence belongs to the complex I 30 kDa subunit family. In terms of assembly, NDH is composed of at least 16 different subunits, 5 of which are encoded in the nucleus.

It is found in the plastid. The protein resides in the chloroplast thylakoid membrane. It catalyses the reaction a plastoquinone + NADH + (n+1) H(+)(in) = a plastoquinol + NAD(+) + n H(+)(out). It carries out the reaction a plastoquinone + NADPH + (n+1) H(+)(in) = a plastoquinol + NADP(+) + n H(+)(out). Its function is as follows. NDH shuttles electrons from NAD(P)H:plastoquinone, via FMN and iron-sulfur (Fe-S) centers, to quinones in the photosynthetic chain and possibly in a chloroplast respiratory chain. The immediate electron acceptor for the enzyme in this species is believed to be plastoquinone. Couples the redox reaction to proton translocation, and thus conserves the redox energy in a proton gradient. This Gossypium barbadense (Sea Island cotton) protein is NAD(P)H-quinone oxidoreductase subunit J, chloroplastic.